We begin with the raw amino-acid sequence, 160 residues long: Nascent polypeptide-associated complex subunit beta (160 aa).

Disordered stretches follow at residues 16–36 (GGKG…GTDD) and 118–160 (ESYQ…TEVE). The span at 20 to 30 (TPRRKVKKVHK) shows a compositional bias: basic residues. The region spanning 33 to 98 (GTDDKKLQTA…GEDKELTELV (66 aa)) is the NAC-A/B domain. A compositionally biased stretch (basic and acidic residues) spans 124 to 134 (QKEKGEDGDKK). A compositionally biased stretch (acidic residues) spans 135–145 (DDDDEDDDDIP).

This sequence belongs to the NAC-beta family. As to quaternary structure, part of the nascent polypeptide-associated complex (NAC), consisting of EGD2 and EGD1. NAC associates with ribosomes via EGD1.

It localises to the cytoplasm. Its subcellular location is the nucleus. Functionally, component of the nascent polypeptide-associated complex (NAC), a dynamic component of the ribosomal exit tunnel, protecting the emerging polypeptides from interaction with other cytoplasmic proteins to ensure appropriate nascent protein targeting. The NAC complex also promotes mitochondrial protein import by enhancing productive ribosome interactions with the outer mitochondrial membrane and blocks the inappropriate interaction of ribosomes translating non-secretory nascent polypeptides with translocation sites in the membrane of the endoplasmic reticulum. EGD1 may act as a transcription factor that exert a negative effect on the expression of several genes that are transcribed by RNA polymerase II. This Phaeosphaeria nodorum (strain SN15 / ATCC MYA-4574 / FGSC 10173) (Glume blotch fungus) protein is Nascent polypeptide-associated complex subunit beta (EGD1).